The primary structure comprises 1039 residues: Protein male-specific lethal-1 (1039 aa).

A compositionally biased stretch (basic residues) spans 1-13; it reads MDKRFKWPPKKRA. Disordered regions lie at residues 1–44 and 171–199; these read MDKR…HLHQ and RRKNQRRNDNDDDDDDPPLPPAAPQQKLI. Position 18 is a phosphoserine (Ser18). Position 238 is a phosphoserine (Ser238). Disordered regions lie at residues 244–266, 358–454, 485–691, and 729–799; these read HAGAVTNQPASKRSESKGRGEFN, GQSV…GNQN, KKDK…EIDV, and IYPP…SSTT. The segment covering 255-266 has biased composition (basic and acidic residues); it reads KRSESKGRGEFN. Over residues 368–392 the composition is skewed to acidic residues; that stretch reads EEDDDEDDEDDENSDKDDDSEEDDY. Residues 397 to 407 are compositionally biased toward basic and acidic residues; that stretch reads SDADVNARTEE. Residues 431–445 show a composition bias toward polar residues; that stretch reads AHSTPNHQQKSSTQA. At Ser433 the chain carries Phosphoserine. The residue at position 434 (Thr434) is a Phosphothreonine. Ser492 and Ser496 each carry phosphoserine. Composition is skewed to basic and acidic residues over residues 504 to 515 and 523 to 570; these read PHQEDAIVDHNA and PKPD…DAPK. Composition is skewed to polar residues over residues 581–592 and 609–625; these read TKTSSRESTLPK and NHQSTKTQTDPVKTQRL. Residue Ser585 is modified to Phosphoserine. At Thr659 the chain carries Phosphothreonine. Ser682 and Ser684 each carry phosphoserine. Position 747 is a phosphothreonine (Thr747). A Phosphoserine modification is found at Ser749. A phosphothreonine mark is found at Thr750, Thr751, and Thr753. The segment covering 759 to 768 has biased composition (polar residues); sequence QHAVTSSMDQ. Ser764 and Ser765 each carry phosphoserine. Thr788 bears the Phosphothreonine mark. Ser810 carries the phosphoserine modification. Thr813 and Thr832 each carry phosphothreonine. In terms of domain architecture, PEHE spans 865–983; the sequence is SLEIPKWRDV…EARDDFGVPW (119 aa). Phosphoserine occurs at positions 879 and 889. The tract at residues 886-904 is interaction with mof HAT domain; the sequence is ELLSDATFERRHQKYVKDE. Residues 1011–1039 are disordered; the sequence is IPTTAAEARHQENHSSYVFPKRRKRQKNR. Thr1014 carries the phosphothreonine modification. Ser1025 carries the phosphoserine modification. Residues 1030–1039 show a composition bias toward basic residues; sequence PKRRKRQKNR. Positions 1032-1037 match the Nuclear localization signal motif; sequence RRKRQK.

It belongs to the msl-1 family. In terms of assembly, component of the male-specific lethal (MSL) histone acetyltransferase complex, composed of mof, mle, msl-1, msl-2 and msl-3 proteins, as well as roX1 and roX2 non-coding RNAs. Interacts (via PEHE domain) with mof (via HAT domain) and msl-3 (via MRG domain); both interactions are direct. Interacts with tamo via the nuclear localization signal. Component of a maternal MSL subcomplex composed of mof, msl-1 and msl-3. In terms of processing, phosphorylation at Ser-18, Thr743, Thr-747 and Thr-751 is required to promote phosphorylation of 'Ser-5' of the C-terminal heptapeptide repeat domain (CTD) of the largest RNA polymerase II subunit Polr2A. Phosphorylated by Cdk7 in vitro. In contrast, phosphorylation at Ser-18, Thr743, Thr-747 and Thr-751 does not affect its role in dosage compensation in males. Ubiquitinated by msl-2.

The protein resides in the nucleus. It is found in the chromosome. In terms of biological role, component of the male-specific lethal (MSL) histone acetyltransferase complex, a multiprotein complex essential for elevating transcription of the single X chromosome in the male (X chromosome dosage compensation). The MSL complex specifically associates with the single X chromosome in males and mediates formation of H4K16ac, promoting a two-fold activation of X chromosome. In complex with msl-2, promotes ubiquitination of histone H2B. In addition to its role in dosage compensation in males, regulates the activity of gene promoters: acts together with Cdk7 to promote phosphorylation of 'Ser-5' of the C-terminal heptapeptide repeat domain (CTD) of the largest RNA polymerase II subunit Polr2A. The polypeptide is Protein male-specific lethal-1 (Drosophila melanogaster (Fruit fly)).